We begin with the raw amino-acid sequence, 39 residues long: Osmotin-like protein (39 aa).

Belongs to the thaumatin family. Contains intrachain disulfide bonds.

In terms of biological role, may be an important antifungal protein. The polypeptide is Osmotin-like protein (Hevea brasiliensis (Para rubber tree)).